We begin with the raw amino-acid sequence, 605 residues long: Phosphoenolpyruvate carboxykinase (ATP) (605 aa).

The segment covering 27 to 48 (SGPSSSFINNNNSNNNNNKSSN) has biased composition (low complexity). The disordered stretch occupies residues 27 to 67 (SGPSSSFINNNNSNNNNNKSSNMFNHDHVNKTNLHPGGVKP). ATP is bound at residue 307–314 (GLSGTGKT).

The protein belongs to the phosphoenolpyruvate carboxykinase (ATP) family.

It catalyses the reaction oxaloacetate + ATP = phosphoenolpyruvate + ADP + CO2. Its pathway is carbohydrate biosynthesis; gluconeogenesis. The polypeptide is Phosphoenolpyruvate carboxykinase (ATP) (acu-6) (Neurospora crassa (strain ATCC 24698 / 74-OR23-1A / CBS 708.71 / DSM 1257 / FGSC 987)).